The primary structure comprises 223 residues: Endonuclease NucS (223 aa).

Belongs to the NucS endonuclease family.

The protein localises to the cytoplasm. Cleaves both 3' and 5' ssDNA extremities of branched DNA structures. The chain is Endonuclease NucS from Mycobacterium marinum (strain ATCC BAA-535 / M).